Consider the following 584-residue polypeptide: MAEYTAGTSPLVDLINSLPDSDGTWGPPITNETTLNGVPYAPFSKSDKLGRMADWTDAKDGRDGRGRQQYNRNYRDQQVYGAGSASLFAPPAAEDEASFSVVSNVRDTGKTRFGRGAIFTRGRGQRGRGGQDTRGGGRQQFQRGGRGGQQYGGGGYSDRGGGRGGGARGRRFGWKDYDKPQRNRDASVNIRPDWKLLEEIDYNRLSKLNLDTDEGEDVDSYGFLYYYDRSYDKPPVKSAERKLAVVDRAVYNVTTSSDPIIQELAEKDEATIFATDSILSMLMCAPRSMYPWDIIIVRQGNKVFLDKRDNAALDMVTVNENAADAPLEASEGSKDVINQPGALAEEATYINHNFVNQVVLESSNQKVDMANENPFHSASEETEPPASKAYKYRRFDLSTSEETPTYLVVRTELDAVQKNPTSGEDQFVTVHALNEFDSKAQGSGGALDWRTKLVSQRGAVVATEMKNNSCKLARWTVQSILAKADVMKLGFVSRVTPKANDKHVILGCVGWKPKDFANQMNLQLSNGWGIVRTIADMCLQREEGKYVLVKDPNKNILRLYEVPANGLDDDDEGPEPEGVAEEED.

The tract at residues 118–184 is disordered; sequence IFTRGRGQRG…KDYDKPQRNR (67 aa). Gly residues predominate over residues 127 to 167; sequence GRGGQDTRGGGRQQFQRGGRGGQQYGGGGYSDRGGGRGGGA. Positions 173–184 are enriched in basic and acidic residues; the sequence is GWKDYDKPQRNR. The interval 312-326 is RNA gate; it reads ALDMVTVNENAADAP. Residues 563 to 584 form a disordered region; it reads PANGLDDDDEGPEPEGVAEEED. Positions 567-584 are enriched in acidic residues; that stretch reads LDDDDEGPEPEGVAEEED.

It belongs to the eIF-3 subunit D family. In terms of assembly, component of the eukaryotic translation initiation factor 3 (eIF-3) complex.

The protein resides in the cytoplasm. In terms of biological role, mRNA cap-binding component of the eukaryotic translation initiation factor 3 (eIF-3) complex, which is involved in protein synthesis of a specialized repertoire of mRNAs and, together with other initiation factors, stimulates binding of mRNA and methionyl-tRNAi to the 40S ribosome. The eIF-3 complex specifically targets and initiates translation of a subset of mRNAs involved in cell proliferation. In the eIF-3 complex, eif3d specifically recognizes and binds the 7-methylguanosine cap of a subset of mRNAs. The sequence is that of Eukaryotic translation initiation factor 3 subunit D from Chaetomium globosum (strain ATCC 6205 / CBS 148.51 / DSM 1962 / NBRC 6347 / NRRL 1970) (Soil fungus).